Here is a 241-residue protein sequence, read N- to C-terminus: uncharacterized protein (241 aa).

Transmembrane regions (helical) follow at residues 12 to 32 (ITEIYFQYVIYILCFGVLLLL), 39 to 59 (LLWLHLVSILVGLIANYEMKF), 89 to 109 (VYDVICHTIMVVICYHQICYT), 117 to 137 (YYTFHLFSVMIIIGALFNCVV), 152 to 172 (LFEYTTIFQALSTGYWVATML), 180 to 200 (IHFYSHWIIWIGLMTINWFVY), and 215 to 235 (YVEAVFIVCTWYSGIISSPLI).

Belongs to the mimivirus L68/R809 family.

Its subcellular location is the membrane. This is an uncharacterized protein from Acanthamoeba polyphaga mimivirus (APMV).